The sequence spans 472 residues: 3-isopropylmalate dehydratase large subunit (472 aa).

[4Fe-4S] cluster contacts are provided by cysteine 347, cysteine 409, and cysteine 412.

The protein belongs to the aconitase/IPM isomerase family. LeuC type 1 subfamily. In terms of assembly, heterodimer of LeuC and LeuD. [4Fe-4S] cluster serves as cofactor.

The enzyme catalyses (2R,3S)-3-isopropylmalate = (2S)-2-isopropylmalate. The protein operates within amino-acid biosynthesis; L-leucine biosynthesis; L-leucine from 3-methyl-2-oxobutanoate: step 2/4. Functionally, catalyzes the isomerization between 2-isopropylmalate and 3-isopropylmalate, via the formation of 2-isopropylmaleate. The protein is 3-isopropylmalate dehydratase large subunit of Salinibacter ruber (strain DSM 13855 / M31).